A 118-amino-acid chain; its full sequence is MNFRALFAATVAALVGSTSATTCTTTQQTAAYVALVSILSDSSFNQCATDSGYSMLTATSLPTTDQYKLMCASTACNSMIAKIISLNAPDCELTVPTSGLVLNVYSYANGFSATCASL.

Residues 1–20 (MNFRALFAATVAALVGSTSA) form the signal peptide. Cystine bridges form between Cys-23–Cys-91, Cys-47–Cys-76, and Cys-71–Cys-115.

It belongs to the elicitin family.

It localises to the secreted. Induces local and distal defense responses (incompatible hypersensitive reaction) in plants from the solanaceae and cruciferae families. Elicits leaf necrosis and causes the accumulation of pathogenesis-related proteins. Might interact with the lipidic molecules of the plasma membrane. The protein is Acidic elicitin A1 (B14) of Phytophthora cryptogea.